The chain runs to 331 residues: MALEYLEQEPWRFLISSATVIFLVLNIAAVLTLAERKVSAYIQLRYGPNRVGPRGLLQPAADVVKLFIKENVSPGRADRWVFLAAPIAMFLPAAAVWLVIPFGPGMVVADLNIGLVYFFAITSIGALGVIMAGYGSRSNFSLLGALRGAGQMISYEVPLILSLLGVAMLTGSLSMVDIVEYQAGGFWNWIIWPQLPMFLAFFVSGLAEVKRIPFDLPEGESEIVGGFMIEYSGMTWALIQASEFASMAVMSAVASTLFLGGWQPPLPFLDLGVFNWLWLGIKTTLLIFVFQWIRWTLPRLRMDQLMDLGWKILVPVTILWLFVTAGAMLVI.

8 helical membrane passes run 13-33 (FLIS…VLTL), 80-100 (WVFL…WLVI), 113-133 (IGLV…IMAG), 159-179 (LILS…VDIV), 183-203 (AGGF…AFFV), 249-269 (VMSA…LPFL), 273-293 (VFNW…FQWI), and 311-331 (KILV…MLVI).

This sequence belongs to the complex I subunit 1 family. NDH-1 is composed of 14 different subunits. Subunits NuoA, H, J, K, L, M, N constitute the membrane sector of the complex.

The protein localises to the cell membrane. The enzyme catalyses a quinone + NADH + 5 H(+)(in) = a quinol + NAD(+) + 4 H(+)(out). Its function is as follows. NDH-1 shuttles electrons from NADH, via FMN and iron-sulfur (Fe-S) centers, to quinones in the respiratory chain. The immediate electron acceptor for the enzyme in this species is believed to be ubiquinone. Couples the redox reaction to proton translocation (for every two electrons transferred, four hydrogen ions are translocated across the cytoplasmic membrane), and thus conserves the redox energy in a proton gradient. This subunit may bind ubiquinone. The chain is NADH-quinone oxidoreductase subunit H from Rubrobacter xylanophilus (strain DSM 9941 / JCM 11954 / NBRC 16129 / PRD-1).